The sequence spans 327 residues: MSSLEPATTAKVALITTKGPIEIELWAKEVPNITRVFIQNCLDKKYIGTTFNKVIKDYLVQTSKIKEPATLKLKDEFHSRLKFNKRGLVGAVHDDKRNSNNVDSLFITLKPTPEFNNNYVLFGKIMGDSIYNVVKINESELKSEETPMYPAEITDIKILVQYFDDLVESKEHIAEPAKKKAKKAKKPRVKLDYTLEDEEDTGFKMKSAHDLLSDSKLSNKLYANKKKGPSENNEKQKTIEKAQDSSMETKKIVPERPDYKGSEEIENETKITSSENMNHETKQDKPNYKAKLDRNPNIDSDYDSDLDLSSSESIDLFAFKQSNFQSS.

The region spanning 8 to 158 (TTAKVALITT…YPAEITDIKI (151 aa)) is the PPIase cyclophilin-type domain. The interval 223 to 307 (ANKKKGPSEN…IDSDYDSDLD (85 aa)) is disordered. Basic and acidic residues-rich tracts occupy residues 228 to 269 (GPSE…ENET) and 277 to 296 (MNHETKQDKPNYKAKLDRNP).

Belongs to the cyclophilin-type PPIase family. CWC27 subfamily. As to quaternary structure, associated with the spliceosome.

The protein localises to the cytoplasm. The protein resides in the nucleus. It carries out the reaction [protein]-peptidylproline (omega=180) = [protein]-peptidylproline (omega=0). Its function is as follows. PPIases accelerate the folding of proteins. It catalyzes the cis-trans isomerization of proline imidic peptide bonds in oligopeptides. Involved in pre-mRNA splicing. The sequence is that of Peptidyl-prolyl isomerase CWC27 (CWC27) from Debaryomyces hansenii (strain ATCC 36239 / CBS 767 / BCRC 21394 / JCM 1990 / NBRC 0083 / IGC 2968) (Yeast).